The sequence spans 154 residues: Prefoldin subunit alpha (154 aa).

The disordered stretch occupies residues 119–154 (EKAEVETEMEELEQQAQQMQQQQMQQMMQQQEQEDE). Positions 132-154 (QQAQQMQQQQMQQMMQQQEQEDE) are enriched in low complexity.

This sequence belongs to the prefoldin subunit alpha family. Heterohexamer of two alpha and four beta subunits.

Its subcellular location is the cytoplasm. Functionally, molecular chaperone capable of stabilizing a range of proteins. Seems to fulfill an ATP-independent, HSP70-like function in archaeal de novo protein folding. This is Prefoldin subunit alpha from Haloarcula marismortui (strain ATCC 43049 / DSM 3752 / JCM 8966 / VKM B-1809) (Halobacterium marismortui).